The following is a 366-amino-acid chain: GTPase Obg (366 aa).

In terms of domain architecture, Obg spans 1 to 162 (MRFVDEATIN…RRLRLELKIL (162 aa)). Residues 163 to 335 (ADAGLLGLPN…VVDAMWRLRD (173 aa)) enclose the OBG-type G domain. GTP is bound by residues 169–176 (GLPNAGKS), 194–198 (FTTLT), 218–221 (DIPG), 288–291 (NKID), and 316–318 (SAM). Residues S176 and T196 each coordinate Mg(2+).

It belongs to the TRAFAC class OBG-HflX-like GTPase superfamily. OBG GTPase family. Monomer. It depends on Mg(2+) as a cofactor.

The protein resides in the cytoplasm. In terms of biological role, an essential GTPase which binds GTP, GDP and possibly (p)ppGpp with moderate affinity, with high nucleotide exchange rates and a fairly low GTP hydrolysis rate. Plays a role in control of the cell cycle, stress response, ribosome biogenesis and in those bacteria that undergo differentiation, in morphogenesis control. The polypeptide is GTPase Obg (Nitratidesulfovibrio vulgaris (strain ATCC 29579 / DSM 644 / CCUG 34227 / NCIMB 8303 / VKM B-1760 / Hildenborough) (Desulfovibrio vulgaris)).